Here is a 716-residue protein sequence, read N- to C-terminus: Probable calcium-binding mitochondrial carrier K02F3.2 (716 aa).

Residues 1–345 (MSFDHLLTSS…CLKDIQAIDP (345 aa)) form an N-terminal domain region. 4 consecutive EF-hand domains span residues 93–121 (YNKE…FCAF), 127–162 (SPDA…TQPL), 165–195 (QDFD…CQLL), and 198–233 (FYEE…VKGH). Residues D106, T108, D110, E117, D140, N142, S144, T146, and E151 each contribute to the Ca(2+) site. Ca(2+) is bound by residues D211, N213, N215, T217, and D222. Residues 346–362 (ERLKRVSQMDRLINIKA) form a linker loop domain region. A carrier domain region spans residues 372 to 664 (GTAFLESAYR…RLFYVDFAGS (293 aa)). Solcar repeat units lie at residues 376 to 468 (LESA…MRDK), 475 to 560 (IPLY…AKLA), and 568 to 656 (NSPG…LQRL). The next 6 helical transmembrane spans lie at 382 to 399 (FLLG…VYPI), 443 to 462 (GLLP…LTMN), 485 to 498 (GTGG…TNPL), 535 to 554 (GSRA…FPAY), 574 to 591 (FASA…VTPA), and 631 to 650 (GTAA…LLTY). The segment at 665-716 (RPTGSELATTKTIQDESSTNPDHVGGYKLAAATFSGIEHKFGLFLPKFETSK) is C-terminal domain.

The protein belongs to the mitochondrial carrier (TC 2.A.29) family. As to quaternary structure, homodimer (via N-terminus).

It localises to the mitochondrion inner membrane. Its function is as follows. Mitochondrial and calcium-binding carrier that catalyzes the calcium-dependent exchange of cytoplasmic glutamate with mitochondrial aspartate across the mitochondrial inner membrane. The chain is Probable calcium-binding mitochondrial carrier K02F3.2 from Caenorhabditis elegans.